The following is a 153-amino-acid chain: DNA gyrase inhibitor (153 aa).

It belongs to the DNA gyrase inhibitor family. In terms of assembly, interacts with DNA gyrase.

The protein localises to the cytoplasm. In terms of biological role, inhibits the supercoiling activity of DNA gyrase. Acts by inhibiting DNA gyrase at an early step, prior to (or at the step of) binding of DNA by the gyrase. It protects cells against toxins that target DNA gyrase, by inhibiting activity of these toxins and reducing the formation of lethal double-strand breaks in the cell. This is DNA gyrase inhibitor from Pantoea sp. (strain At-9b).